A 109-amino-acid chain; its full sequence is Irditoxin subunit A (109 aa).

Residues 1–19 form the signal peptide; that stretch reads MKTLLLAVAVVAFVCLGSA. The propeptide occupies 20 to 34; sequence DQLGLGRQQIDWGQG. Gln35 carries the post-translational modification Pyrrolidone carboxylic acid. Cystine bridges form between Cys44–Cys66, Cys47–Cys55, Cys61–Cys85, Cys89–Cys100, and Cys101–Cys106.

It belongs to the three-finger toxin family. Ancestral subfamily. Boigatoxin sub-subfamily. As to quaternary structure, heterodimer of A and B chains; disulfide-linked. In terms of tissue distribution, expressed by the venom gland.

Its subcellular location is the secreted. Functionally, this bird and reptile-specific postsynaptic neurotoxin inhibits the chick muscle alpha-1-beta-1-gamma-delta (CHRNA1-CHRNB1-CHRNG-CHNRD) nicotinic acetylcholine receptor (nAChR) 100-fold more compared with the mouse receptor. In vivo, produces rapid flaccid paralysis, dyspnea and increased respiratory rate in geckos. At sublethal doses geckos were immobilized for up to three days and then recovered. Chicks injected with lethal doses showed rapid onset of inactivity, dyspnea and neck droop, and no extended paralysis with survival was seen. The protein is Irditoxin subunit A of Boiga irregularis (Brown tree snake).